A 261-amino-acid chain; its full sequence is Triosephosphate isomerase (261 aa).

10–12 (NWK) is a substrate binding site. Catalysis depends on histidine 100, which acts as the Electrophile. Residue glutamate 172 is the Proton acceptor of the active site. Substrate is bound by residues glycine 178, serine 218, and 239–240 (GG).

This sequence belongs to the triosephosphate isomerase family. In terms of assembly, homodimer.

Its subcellular location is the cytoplasm. It catalyses the reaction D-glyceraldehyde 3-phosphate = dihydroxyacetone phosphate. The protein operates within carbohydrate biosynthesis; gluconeogenesis. It functions in the pathway carbohydrate degradation; glycolysis; D-glyceraldehyde 3-phosphate from glycerone phosphate: step 1/1. Functionally, involved in the gluconeogenesis. Catalyzes stereospecifically the conversion of dihydroxyacetone phosphate (DHAP) to D-glyceraldehyde-3-phosphate (G3P). The protein is Triosephosphate isomerase of Mycobacterium tuberculosis (strain CDC 1551 / Oshkosh).